The following is an 84-amino-acid chain: Small ribosomal subunit protein bS16 (84 aa).

This sequence belongs to the bacterial ribosomal protein bS16 family.

The polypeptide is Small ribosomal subunit protein bS16 (Cupriavidus pinatubonensis (strain JMP 134 / LMG 1197) (Cupriavidus necator (strain JMP 134))).